An 858-amino-acid chain; its full sequence is DNA mismatch repair protein MutS (858 aa).

602 to 609 contacts ATP; that stretch reads GPNMSGKS.

This sequence belongs to the DNA mismatch repair MutS family.

Functionally, this protein is involved in the repair of mismatches in DNA. It is possible that it carries out the mismatch recognition step. This protein has a weak ATPase activity. Overexpression of mutSL partially suppresses the high spontaneous mutation frequency of a ytkD/mutM/mutY triple disruption which lacks the system required to prevent damage by oxidized guanine (8-oxo-dGTP). This suggests that MutSL also functions to repair mismatches due to oxidative stress in both growing and stationary phase cells. The chain is DNA mismatch repair protein MutS from Bacillus subtilis (strain 168).